A 589-amino-acid chain; its full sequence is Aspartate--tRNA ligase (589 aa).

Glu-175 is an L-aspartate binding site. The tract at residues 199–202 (QLFK) is aspartate. Arg-221 provides a ligand contact to L-aspartate. Residues 221–223 (RDE) and Gln-230 each bind ATP. Residue His-449 coordinates L-aspartate. Residue Glu-483 participates in ATP binding. Arg-490 serves as a coordination point for L-aspartate. 535–538 (GLDR) contacts ATP.

This sequence belongs to the class-II aminoacyl-tRNA synthetase family. Type 1 subfamily. Homodimer.

The protein localises to the cytoplasm. It carries out the reaction tRNA(Asp) + L-aspartate + ATP = L-aspartyl-tRNA(Asp) + AMP + diphosphate. Functionally, catalyzes the attachment of L-aspartate to tRNA(Asp) in a two-step reaction: L-aspartate is first activated by ATP to form Asp-AMP and then transferred to the acceptor end of tRNA(Asp). This Lysinibacillus sphaericus (strain C3-41) protein is Aspartate--tRNA ligase.